A 740-amino-acid polypeptide reads, in one-letter code: Ion-translocating oxidoreductase complex subunit C (740 aa).

4Fe-4S ferredoxin-type domains follow at residues 369–397 and 407–436; these read GEPQ…QQLY and KATT…VQYF. 8 residues coordinate [4Fe-4S] cluster: Cys377, Cys380, Cys383, Cys387, Cys416, Cys419, Cys422, and Cys426. 2 disordered regions span residues 571-590 and 602-716; these read LEQQ…RKAA and KLEQ…DPRK. Composition is skewed to low complexity over residues 573 to 583 and 637 to 647; these read QQQANAEPEQQ.

It belongs to the 4Fe4S bacterial-type ferredoxin family. RnfC subfamily. The complex is composed of six subunits: RsxA, RsxB, RsxC, RsxD, RsxE and RsxG. It depends on [4Fe-4S] cluster as a cofactor.

It localises to the cell inner membrane. In terms of biological role, part of a membrane-bound complex that couples electron transfer with translocation of ions across the membrane. Required to maintain the reduced state of SoxR. Probably transfers electron from NAD(P)H to SoxR. This Escherichia coli (strain K12) protein is Ion-translocating oxidoreductase complex subunit C.